We begin with the raw amino-acid sequence, 317 residues long: MPVQGSQRRLLGSLNSTPTATPHLGLAANQTGARCLEVSIPDGLFLSLGLVSLVENVLVVTAIAKNRNLHSPMYCFICCLALSDLLVSGSNMLETAVILLLEAGALAARAAVVQQLDNVIDVITCSSMLASLCFLGAIAVDRYISIFYALRYHSIVTLPRARRAVAAIWVASVLFSMLFIAYYDHAAVLLCLVVFFLAMLVLMAVLYIHMLARARQHAQGIARLHKRQCPAHQGFGLKGAATLTILLGIFFLCWGPFFLHLTLIVLCPQHPTCSCIFKNFNLFLALIICNAIIDPLIYAFRSQELRRTLKEVLLCSW.

Topologically, residues 1 to 37 (MPVQGSQRRLLGSLNSTPTATPHLGLAANQTGARCLE) are extracellular. Residue Asn-29 is glycosylated (N-linked (GlcNAc...) asparagine). The chain crosses the membrane as a helical span at residues 38 to 63 (VSIPDGLFLSLGLVSLVENVLVVTAI). The Cytoplasmic segment spans residues 64–72 (AKNRNLHSP). The helical transmembrane segment at 73-93 (MYCFICCLALSDLLVSGSNML) threads the bilayer. The Extracellular segment spans residues 94–118 (ETAVILLLEAGALAARAAVVQQLDN). The chain crosses the membrane as a helical span at residues 119–140 (VIDVITCSSMLASLCFLGAIAV). Topologically, residues 141 to 163 (DRYISIFYALRYHSIVTLPRARR) are cytoplasmic. The chain crosses the membrane as a helical span at residues 164–183 (AVAAIWVASVLFSMLFIAYY). Over 184-191 (DHAAVLLC) the chain is Extracellular. A helical membrane pass occupies residues 192–211 (LVVFFLAMLVLMAVLYIHML). At 212-240 (ARARQHAQGIARLHKRQCPAHQGFGLKGA) the chain is on the cytoplasmic side. A helical membrane pass occupies residues 241–266 (ATLTILLGIFFLCWGPFFLHLTLIVL). The Extracellular segment spans residues 267–279 (CPQHPTCSCIFKN). The helical transmembrane segment at 280–300 (FNLFLALIICNAIIDPLIYAF) threads the bilayer. The Cytoplasmic portion of the chain corresponds to 301–317 (RSQELRRTLKEVLLCSW). Cys-315 carries the S-palmitoyl cysteine lipid modification.

This sequence belongs to the G-protein coupled receptor 1 family. As to quaternary structure, interacts with MGRN1, but does not undergo MGRN1-mediated ubiquitination; this interaction competes with GNAS-binding and thus inhibits agonist-induced cAMP production. Interacts with OPN3; the interaction results in a decrease in MC1R-mediated cAMP signaling and ultimately a decrease in melanin production in melanocytes.

Its subcellular location is the cell membrane. In terms of biological role, receptor for MSH (alpha, beta and gamma) and ACTH. The activity of this receptor is mediated by G proteins which activate adenylate cyclase. Mediates melanogenesis, the production of eumelanin (black/brown) and phaeomelanin (red/yellow), via regulation of cAMP signaling in melanocytes. The protein is Melanocyte-stimulating hormone receptor (MC1R) of Cercopithecus mitis (Blue monkey).